We begin with the raw amino-acid sequence, 205 residues long: Holliday junction branch migration complex subunit RuvA (205 aa).

Positions 1 to 64 (MIGRLKGILI…ENLHQLFGFA (64 aa)) are domain I. The tract at residues 65–143 (EQRDRSLFRT…NWDLPQGDML (79 aa)) is domain II. The flexible linker stretch occupies residues 144–153 (AHGEIQAIAS). Residues 153–205 (SDNDIYAEAESALIALGYKPVDAAKMVASAAKQKPEARSEELIRIALRSLAGV) form a domain III region.

This sequence belongs to the RuvA family. As to quaternary structure, homotetramer. Forms an RuvA(8)-RuvB(12)-Holliday junction (HJ) complex. HJ DNA is sandwiched between 2 RuvA tetramers; dsDNA enters through RuvA and exits via RuvB. An RuvB hexamer assembles on each DNA strand where it exits the tetramer. Each RuvB hexamer is contacted by two RuvA subunits (via domain III) on 2 adjacent RuvB subunits; this complex drives branch migration. In the full resolvosome a probable DNA-RuvA(4)-RuvB(12)-RuvC(2) complex forms which resolves the HJ.

The protein localises to the cytoplasm. Functionally, the RuvA-RuvB-RuvC complex processes Holliday junction (HJ) DNA during genetic recombination and DNA repair, while the RuvA-RuvB complex plays an important role in the rescue of blocked DNA replication forks via replication fork reversal (RFR). RuvA specifically binds to HJ cruciform DNA, conferring on it an open structure. The RuvB hexamer acts as an ATP-dependent pump, pulling dsDNA into and through the RuvAB complex. HJ branch migration allows RuvC to scan DNA until it finds its consensus sequence, where it cleaves and resolves the cruciform DNA. The polypeptide is Holliday junction branch migration complex subunit RuvA (Cellvibrio japonicus (strain Ueda107) (Pseudomonas fluorescens subsp. cellulosa)).